A 543-amino-acid polypeptide reads, in one-letter code: Thermosome subunit beta (543 aa).

Positions threonine 522–aspartate 543 are disordered. Residues lysine 523–aspartate 543 show a composition bias toward low complexity.

Belongs to the TCP-1 chaperonin family. Forms a Heterooligomeric complex of two stacked eight-membered rings. The N-terminus is blocked.

In terms of biological role, molecular chaperone; binds unfolded polypeptides in vitro, and has a weak ATPase activity. The polypeptide is Thermosome subunit beta (thsB) (Thermoplasma acidophilum (strain ATCC 25905 / DSM 1728 / JCM 9062 / NBRC 15155 / AMRC-C165)).